Here is a 288-residue protein sequence, read N- to C-terminus: ATP phosphoribosyltransferase (288 aa).

Belongs to the ATP phosphoribosyltransferase family. Long subfamily. The cofactor is Mg(2+).

It is found in the cytoplasm. It carries out the reaction 1-(5-phospho-beta-D-ribosyl)-ATP + diphosphate = 5-phospho-alpha-D-ribose 1-diphosphate + ATP. It functions in the pathway amino-acid biosynthesis; L-histidine biosynthesis; L-histidine from 5-phospho-alpha-D-ribose 1-diphosphate: step 1/9. With respect to regulation, feedback inhibited by histidine. In terms of biological role, catalyzes the condensation of ATP and 5-phosphoribose 1-diphosphate to form N'-(5'-phosphoribosyl)-ATP (PR-ATP). Has a crucial role in the pathway because the rate of histidine biosynthesis seems to be controlled primarily by regulation of HisG enzymatic activity. The chain is ATP phosphoribosyltransferase from Methanococcus maripaludis (strain C5 / ATCC BAA-1333).